The primary structure comprises 716 residues: Delta-1-pyrroline-5-carboxylate synthase 1 (716 aa).

The interval 1–296 is glutamate 5-kinase; sequence MASVDPSRSF…WESSKDVSTR (296 aa). Substrate is bound by residues serine 60, aspartate 157, and asparagine 176. Residues 196 to 197, 202 to 207, and 236 to 242 each bind ATP; these read SD, YSGPPS, and RGGMTAK. The segment at 297-716 is gamma-glutamyl phosphate reductase; the sequence is EMAVAARDCS…VYTHKSLPLQ (420 aa).

In the N-terminal section; belongs to the glutamate 5-kinase family. This sequence in the C-terminal section; belongs to the gamma-glutamyl phosphate reductase family. As to expression, expressed at high levels in leaves.

It catalyses the reaction L-glutamate + ATP = L-glutamyl 5-phosphate + ADP. The enzyme catalyses L-glutamate 5-semialdehyde + phosphate + NADP(+) = L-glutamyl 5-phosphate + NADPH + H(+). It participates in amino-acid biosynthesis; L-proline biosynthesis; L-glutamate 5-semialdehyde from L-glutamate: step 1/2. It functions in the pathway amino-acid biosynthesis; L-proline biosynthesis; L-glutamate 5-semialdehyde from L-glutamate: step 2/2. Its activity is regulated as follows. Feedback regulated by proline. P5CS plays a key role in proline biosynthesis, leading to osmoregulation in plants. Involved in abiotic stress tolerance. The polypeptide is Delta-1-pyrroline-5-carboxylate synthase 1 (Oryza sativa subsp. japonica (Rice)).